A 127-amino-acid polypeptide reads, in one-letter code: Small ribosomal subunit protein eS8 (127 aa).

It belongs to the eukaryotic ribosomal protein eS8 family. As to quaternary structure, part of the 30S ribosomal subunit.

The sequence is that of Small ribosomal subunit protein eS8 from Nanoarchaeum equitans (strain Kin4-M).